The sequence spans 500 residues: NAD(P)H-quinone oxidoreductase chain 4, chloroplastic (500 aa).

14 helical membrane passes run 4–24, 37–57, 87–107, 113–130, 134–154, 167–187, 208–228, 242–262, 272–292, 305–325, 330–350, 386–406, 416–436, and 462–482; these read FPWL…IFFL, IGIC…FFQL, IGPI…AWPV, LFHF…GLFS, LLLF…LLSM, FILY…GMGL, ALEI…LPII, HYST…YGLI, AHSI…IYAA, IAYS…SITD, GAVL…FLAG, LALP…GIIT, VLIT…SLSM, and LFIS…PDFV.

It belongs to the complex I subunit 4 family.

The protein localises to the plastid. It is found in the chloroplast thylakoid membrane. It carries out the reaction a plastoquinone + NADH + (n+1) H(+)(in) = a plastoquinol + NAD(+) + n H(+)(out). The catalysed reaction is a plastoquinone + NADPH + (n+1) H(+)(in) = a plastoquinol + NADP(+) + n H(+)(out). The sequence is that of NAD(P)H-quinone oxidoreductase chain 4, chloroplastic from Ceratophyllum demersum (Rigid hornwort).